We begin with the raw amino-acid sequence, 2117 residues long: Tudor domain-containing 6 (2117 aa).

Tudor domains follow at residues 62–118 (DGNP…FFYL), 291–350 (AENL…FFRM), 527–584 (KPVV…FQQL), 757–816 (EPLL…FLKM), and 974–1030 (PQTF…AGDI). The segment at 1125-1216 (ASACKKESST…SSKPEVVKPK (92 aa)) is disordered. The segment covering 1127–1152 (ACKKESSTGPKRDAIDQVPKSRESHA) has biased composition (basic and acidic residues). 2 stretches are compositionally biased toward polar residues: residues 1153–1174 (IQRS…STNG) and 1181–1209 (DSGT…TSSK). 2 consecutive Tudor domains span residues 1282–1340 (DIHE…FASF) and 1485–1543 (CMPV…LSDV).

In terms of assembly, interacts (via Tudor domain) with buc (when dimethylated on arginine residues); and may be responsible for recruitment of different protein complexes to germ plasm.

The protein resides in the cytoplasm. In terms of biological role, tudor domain-containing protein involved in germ cell development, more specifically the formation of chromatoid body (during spermiogenesis), Balbiani body (during oogenesis), germ plasm (upon fertilization), and for proper miRNA expression and spliceosome maturation. Required for Balbiani body and germ plasm formation and mobility through interaction with dimethylated arginines in the prion-like protein Bucky ball (buc). Coordinates transcript deposition into future primordial germ cells. Interacts with known germ plasm mRNAs such as vasa, dazl, nanos3 and hook2. The protein is Tudor domain-containing 6 of Danio rerio (Zebrafish).